The sequence spans 67 residues: Large ribosomal subunit protein uL29 (67 aa).

Belongs to the universal ribosomal protein uL29 family.

The sequence is that of Large ribosomal subunit protein uL29 from Methanosarcina mazei (strain ATCC BAA-159 / DSM 3647 / Goe1 / Go1 / JCM 11833 / OCM 88) (Methanosarcina frisia).